The primary structure comprises 510 residues: uncharacterized protein (510 aa).

It to B.subtilis SpoVR.

This is an uncharacterized protein from Escherichia coli (strain K12).